The chain runs to 261 residues: Hemin import ATP-binding protein HmuV (261 aa).

One can recognise an ABC transporter domain in the interval 2 to 243; sequence LCANNVSAQI…ALLKRVYNIN (242 aa). 34–41 contributes to the ATP binding site; sequence GPNGAGKS.

Belongs to the ABC transporter superfamily. Heme (hemin) importer (TC 3.A.1.14.5) family. The complex is composed of two ATP-binding proteins (HmuV), two transmembrane proteins (HmuU) and a solute-binding protein (HmuT).

The protein localises to the cell inner membrane. Its function is as follows. Part of the ABC transporter complex HmuTUV involved in hemin import. Responsible for energy coupling to the transport system. The chain is Hemin import ATP-binding protein HmuV from Pseudoalteromonas translucida (strain TAC 125).